A 187-amino-acid polypeptide reads, in one-letter code: Adenine phosphoribosyltransferase (187 aa).

133–137 (ATGGS) serves as a coordination point for AMP.

This sequence belongs to the purine/pyrimidine phosphoribosyltransferase family. As to quaternary structure, homodimer. Mg(2+) is required as a cofactor.

The protein resides in the cytoplasm. Its subcellular location is the nucleus. It catalyses the reaction AMP + diphosphate = 5-phospho-alpha-D-ribose 1-diphosphate + adenine. It participates in purine metabolism; AMP biosynthesis via salvage pathway; AMP from adenine: step 1/1. Catalyzes a salvage reaction resulting in the formation of AMP, that is energically less costly than de novo synthesis. In Kluyveromyces lactis (strain ATCC 8585 / CBS 2359 / DSM 70799 / NBRC 1267 / NRRL Y-1140 / WM37) (Yeast), this protein is Adenine phosphoribosyltransferase (APT1).